The sequence spans 1029 residues: MREWCMLRESRTNTPRRAAERGKRPGGSSVRGGERRIVTALCYDLVGSTDLMHVMDIEDYQELMSAFQLASKQAIASHSGVMQHEAGDGGVALFPIELEAKDAASLAIRAGLGIVEACKRVGREAGQDDLQVRVGIATSVALVLEGSREGWTREPVTGAALAMAARLQAITAPNSVLVSEETRHLAGRSYAFVFQGSKELKGFAAPEKVWRALGHKVGVDRFYAFGRMGGPLINRENELNTIGQLWDGVLAGQGSVVLIQGDAGIGKSRLLREIRRRTRAKRSKLLFFQCLPGGFRSTLHPLLNNLPEAVSGSAGQMGPTAAAVAALFERNGIRDPAVVDVFSYLLGAQGSRLQSNEDPKAIREKAHRALLRALEAVCRRGPAVVAVEDVHWIDPTSRDLLGEAARIIAKFPVLLVTTSRPSYASEWLDAANPTRLALRPLDSDETRLAIKAKWPEHRLALLPDLFDATERISGGVPLFIEEICQWVSQNVEPDTMRLSESANPSHVSAFESILESRLQQLGTAREVARAAAVAGTQVTLPLLRALLPDFGKSALANAADTLCETGFLTRIRVPGRTAYGFRHTLIQETIYNAVLRKQRQVLHRRLFTAVNQNRGMAAWIDTGALAEHAERAGLVEEAVPLFIAAGKESSSRSAMIEARQFLEHALDLCGQMSESDTAEALKLLALTALGPILIGTVGLSSEPARRLYEDAVEIARRRPMSEQSQWFPIYWGWWLTGQDFRVMHDRALEVRSMLSKANEPEIQLQVNHCIWAIDFNLGRHRETQDAIKAGLALYDEKRAKESRTEFGGHDAKVCGLGQLALSLWLTGRTKASDAALSRMIAFTDRIAHAHSKAHSLDTEAVSAFYRDDFERLTEVSARMADFAKRHKMQSLSGQSLLFSGWAEAHRTGLASGHARFQNGLSLLRELGAVADLPIYLCMHATLLGLAGKIEPAIEVVNEAIGRGEETGHAYWLAELHRCRAILRARAGERKDAVAADLRCAVEIAESQGATALTRRARHSMRELGIVIGR.

Over residues 1–23 (MREWCMLRESRTNTPRRAAERGK) the composition is skewed to basic and acidic residues. A disordered region spans residues 1–31 (MREWCMLRESRTNTPRRAAERGKRPGGSSVR). The region spanning 39–168 (TALCYDLVGS…AALAMAARLQ (130 aa)) is the Guanylate cyclase domain. 261-268 (GDAGIGKS) is an ATP binding site.

This is an uncharacterized protein from Rhizobium meliloti (strain 1021) (Ensifer meliloti).